The chain runs to 276 residues: Glutamate racemase (276 aa).

Residues 10 to 11 (DS) and 42 to 43 (YG) each bind substrate. Cys73 serves as the catalytic Proton donor/acceptor. 74–75 (NS) provides a ligand contact to substrate. Cys183 functions as the Proton donor/acceptor in the catalytic mechanism. 184–185 (TH) is a substrate binding site.

The protein belongs to the aspartate/glutamate racemases family.

It catalyses the reaction L-glutamate = D-glutamate. It functions in the pathway cell wall biogenesis; peptidoglycan biosynthesis. Its function is as follows. Provides the (R)-glutamate required for cell wall biosynthesis. This Parafrankia sp. (strain EAN1pec) protein is Glutamate racemase.